We begin with the raw amino-acid sequence, 876 residues long: DNA double-strand break repair Rad50 ATPase (876 aa).

ATP contacts are provided by residues arginine 11, 31–37 (NGAGKTT), and glutamine 139. Coiled coils occupy residues 188–528 (RERV…EDRL) and 575–710 (SGVE…RKER). One can recognise a Zinc-hook domain in the interval 387–484 (EETLQSEYEE…RLESVRRELE (98 aa)). Residues cysteine 432 and cysteine 435 each contribute to the Zn(2+) site.

It belongs to the SMC family. RAD50 subfamily. In terms of assembly, homodimer. Forms a heterotetramer composed of two Mre11 subunits and two Rad50 subunits. It depends on Zn(2+) as a cofactor.

Functionally, part of the Rad50/Mre11 complex, which is involved in the early steps of DNA double-strand break (DSB) repair. The complex may facilitate opening of the processed DNA ends to aid in the recruitment of HerA and NurA. Rad50 controls the balance between DNA end bridging and DNA resection via ATP-dependent structural rearrangements of the Rad50/Mre11 complex. The polypeptide is DNA double-strand break repair Rad50 ATPase (Methanopyrus kandleri (strain AV19 / DSM 6324 / JCM 9639 / NBRC 100938)).